Here is a 567-residue protein sequence, read N- to C-terminus: UPF0313 protein TM_0337 (567 aa).

Residues 288–560 form the Radical SAM core domain; it reads KAIETVKFSI…NKMKENVLFK (273 aa). The [4Fe-4S] cluster site is built by cysteine 303, cysteine 307, and cysteine 310.

Belongs to the UPF0313 family. Requires [4Fe-4S] cluster as cofactor.

The chain is UPF0313 protein TM_0337 from Thermotoga maritima (strain ATCC 43589 / DSM 3109 / JCM 10099 / NBRC 100826 / MSB8).